A 433-amino-acid chain; its full sequence is 3-phosphoshikimate 1-carboxyvinyltransferase (433 aa).

Lysine 21, serine 22, and arginine 26 together coordinate 3-phosphoshikimate. Lysine 21 is a phosphoenolpyruvate binding site. Residues glycine 96 and arginine 124 each coordinate phosphoenolpyruvate. Positions 167, 168, 169, 195, 310, and 337 each coordinate 3-phosphoshikimate. Glutamine 169 lines the phosphoenolpyruvate pocket. Catalysis depends on aspartate 310, which acts as the Proton acceptor. Phosphoenolpyruvate is bound by residues arginine 341, arginine 384, and lysine 410.

The protein belongs to the EPSP synthase family. Monomer.

The protein resides in the cytoplasm. The enzyme catalyses 3-phosphoshikimate + phosphoenolpyruvate = 5-O-(1-carboxyvinyl)-3-phosphoshikimate + phosphate. It participates in metabolic intermediate biosynthesis; chorismate biosynthesis; chorismate from D-erythrose 4-phosphate and phosphoenolpyruvate: step 6/7. Functionally, catalyzes the transfer of the enolpyruvyl moiety of phosphoenolpyruvate (PEP) to the 5-hydroxyl of shikimate-3-phosphate (S3P) to produce enolpyruvyl shikimate-3-phosphate and inorganic phosphate. The polypeptide is 3-phosphoshikimate 1-carboxyvinyltransferase (Clostridium botulinum (strain Alaska E43 / Type E3)).